The primary structure comprises 306 residues: Type 3 secretion system translocon protein SctB (306 aa).

The chain crosses the membrane as a helical span at residues 128–152; sequence LMIAMAVVSGIMAATSTVASAFSIA.

Belongs to the SctB/YopD family. In terms of assembly, the core secretion machinery of the T3SS is composed of approximately 20 different proteins, including cytoplasmic components, a base, an export apparatus and a needle. This subunit is involved in the formation of a pore, called the translocon, in host membrane. Interacts with YopB/SctE and YopE. Together with YopB/SctE, forms a multimeric integral membrane complex with a mass of between 500 and 700 kDa. Interacts with its cognate chaperone SycD.

It localises to the secreted. Its subcellular location is the host membrane. Its function is as follows. Component of the type III secretion system (T3SS), also called injectisome, which is used to inject bacterial effector proteins into eukaryotic host cells. YopB/SctE and YopD/SctB are inserted into the host membrane where they form a pore and allow the translocation of effector proteins into the cytosol of target cells. In terms of biological role, involved in pathogenesis. Essential for the establishment of Yersinia infections in a mouse model system, but not for the targeting of effector Yops. May modulate the host's immune response at a distance from the site of infection. This is Type 3 secretion system translocon protein SctB from Yersinia enterocolitica.